The primary structure comprises 167 residues: Large ribosomal subunit protein uL10 (167 aa).

It belongs to the universal ribosomal protein uL10 family. Part of the ribosomal stalk of the 50S ribosomal subunit. The N-terminus interacts with L11 and the large rRNA to form the base of the stalk. The C-terminus forms an elongated spine to which L12 dimers bind in a sequential fashion forming a multimeric L10(L12)X complex.

Its function is as follows. Forms part of the ribosomal stalk, playing a central role in the interaction of the ribosome with GTP-bound translation factors. The sequence is that of Large ribosomal subunit protein uL10 from Alkaliphilus oremlandii (strain OhILAs) (Clostridium oremlandii (strain OhILAs)).